A 325-amino-acid polypeptide reads, in one-letter code: Phenylalanine--tRNA ligase alpha subunit (325 aa).

Glutamate 251 contacts Mg(2+).

It belongs to the class-II aminoacyl-tRNA synthetase family. Phe-tRNA synthetase alpha subunit type 1 subfamily. As to quaternary structure, tetramer of two alpha and two beta subunits. Requires Mg(2+) as cofactor.

It is found in the cytoplasm. It catalyses the reaction tRNA(Phe) + L-phenylalanine + ATP = L-phenylalanyl-tRNA(Phe) + AMP + diphosphate + H(+). In Thermotoga maritima (strain ATCC 43589 / DSM 3109 / JCM 10099 / NBRC 100826 / MSB8), this protein is Phenylalanine--tRNA ligase alpha subunit (pheS).